Reading from the N-terminus, the 84-residue chain is Small ribosomal subunit protein uS15 (84 aa).

The protein belongs to the universal ribosomal protein uS15 family. As to quaternary structure, part of the 30S ribosomal subunit. Forms a bridge to the 50S subunit in the 70S ribosome, contacting the 23S rRNA.

In terms of biological role, one of the primary rRNA binding proteins, it binds directly to 16S rRNA where it helps nucleate assembly of the platform of the 30S subunit by binding and bridging several RNA helices of the 16S rRNA. Its function is as follows. Forms an intersubunit bridge (bridge B4) with the 23S rRNA of the 50S subunit in the ribosome. The protein is Small ribosomal subunit protein uS15 of Fervidobacterium nodosum (strain ATCC 35602 / DSM 5306 / Rt17-B1).